Here is a 108-residue protein sequence, read N- to C-terminus: Synaptic plasticity regulator PANTS (108 aa).

Positions 58–108 are disordered; sequence KNHSTQAKDSLQESERKRLADQRKFTPVWELRQKPPSDWHLPLNQGEPQDP. The segment covering 67 to 81 has biased composition (basic and acidic residues); sequence SLQESERKRLADQRK.

This sequence belongs to the UPF0545 family. Rapidly degraded by proteolysis following neuronal stimulation, resulting in increased AMPA receptor clustering.

Its subcellular location is the synapse. The protein resides in the synaptic cleft. Functionally, negatively regulates long-term potentiation and modulates adult synaptic plasticity. The protein is Synaptic plasticity regulator PANTS of Danio rerio (Zebrafish).